The primary structure comprises 491 residues: Glycylpeptide N-tetradecanoyltransferase (491 aa).

A tetradecanoyl-CoA-binding site is contributed by 45–48; the sequence is HKFW. The interval 53 to 79 is disordered; that stretch reads VPQITGSGASAPMEEGPIDDPKTPADV. Residues 182 to 184 and 190 to 194 contribute to the tetradecanoyl-CoA site; these read LCV and SKRLA. Catalysis depends on L491, which acts as the Proton acceptor; via carboxylate.

This sequence belongs to the NMT family. In terms of assembly, monomer.

It is found in the cytoplasm. It catalyses the reaction N-terminal glycyl-[protein] + tetradecanoyl-CoA = N-tetradecanoylglycyl-[protein] + CoA + H(+). Adds a myristoyl group to the N-terminal glycine residue of certain cellular proteins. The chain is Glycylpeptide N-tetradecanoyltransferase from Cryptococcus neoformans (Filobasidiella neoformans).